We begin with the raw amino-acid sequence, 172 residues long: Shikimate kinase (172 aa).

14-19 (GAGKST) contacts ATP. Serine 18 serves as a coordination point for Mg(2+). Substrate contacts are provided by aspartate 36, arginine 60, and glycine 82. Arginine 120 provides a ligand contact to ATP. Position 139 (arginine 139) interacts with substrate. Glutamine 156 is a binding site for ATP.

The protein belongs to the shikimate kinase family. Monomer. The cofactor is Mg(2+).

The protein resides in the cytoplasm. The enzyme catalyses shikimate + ATP = 3-phosphoshikimate + ADP + H(+). It participates in metabolic intermediate biosynthesis; chorismate biosynthesis; chorismate from D-erythrose 4-phosphate and phosphoenolpyruvate: step 5/7. Its function is as follows. Catalyzes the specific phosphorylation of the 3-hydroxyl group of shikimic acid using ATP as a cosubstrate. In Aliivibrio salmonicida (strain LFI1238) (Vibrio salmonicida (strain LFI1238)), this protein is Shikimate kinase.